The sequence spans 433 residues: 23S rRNA (uracil(1939)-C(5))-methyltransferase RlmD (433 aa).

Residues 10-68 (RTTTRQIITVSVNDLDSFGQGVARHNGKTLFIPGLLPQENAEVTVTEDKKQYARAKVVR) enclose the TRAM domain. The [4Fe-4S] cluster site is built by C81, C87, C90, and C162. Q265, F294, N299, E315, N342, and D363 together coordinate S-adenosyl-L-methionine. C389 (nucleophile) is an active-site residue.

It belongs to the class I-like SAM-binding methyltransferase superfamily. RNA M5U methyltransferase family. RlmD subfamily.

It carries out the reaction uridine(1939) in 23S rRNA + S-adenosyl-L-methionine = 5-methyluridine(1939) in 23S rRNA + S-adenosyl-L-homocysteine + H(+). Its function is as follows. Catalyzes the formation of 5-methyl-uridine at position 1939 (m5U1939) in 23S rRNA. The sequence is that of 23S rRNA (uracil(1939)-C(5))-methyltransferase RlmD from Escherichia coli O157:H7.